A 454-amino-acid polypeptide reads, in one-letter code: MISAFDIFKIGIGPSSSHTVGPMNAGKSFIDRLESSGLLTATSHIVVDLYGSLSLTGKGHATDVAIIMGLAGNSPQDVVIDEIPAFIELVTRSGRLPVASGAHIVDFPVAKNIIFHPEMLPRHENGMRITAWKGQEELLSKTYYSVGGGFIVEEEHFGLSHDVETSVPYDFHSAGELLKMCDYNGLSISGLMMHNELALRSKAEIDAGFARIWQVMHDGIERGMNTEGVLPGPLNVPRRAVALRRQLVSSDNISNDPMNVIDWINMYALAVSEENAAGGRVVTAPTNGACGIIPAVLAYYDKFRRPVNERSIARYFLAAGAIGALYKMNASISGAEVGCQGEIGVACSMAAAGLTELLGGSPAQVCNAAEIAMEHNLGLTCDPVAGQVQIPCIERNAINAVKAVNAARMAMRRTSAPRVSLDKVIETMYETGKDMNDKYRETSRGGLAIKVVCG.

Belongs to the iron-sulfur dependent L-serine dehydratase family. The cofactor is [4Fe-4S] cluster.

The enzyme catalyses L-serine = pyruvate + NH4(+). Its pathway is amino-acid degradation; L-threonine degradation via propanoate pathway. In Escherichia coli (strain K12), this protein is L-serine dehydratase TdcG (tdcG).